Reading from the N-terminus, the 604-residue chain is uncharacterized protein (604 aa).

A signal peptide spans 1 to 40 (MWLQQRIKVFPGLLSSSWARRVLAVSGFLVIIYWYIFSGS). At 41–563 (HYRSFWYSGK…EEHMAKQYRG (523 aa)) the chain is on the extracellular side. N337 carries N-linked (GlcNAc...) asparagine glycosylation. The chain crosses the membrane as a helical span at residues 564-584 (LPFLFWFSVASLITLFHLFLF). Residues 585-604 (KLIYNEYCGPGAKPLFRSKV) lie on the Cytoplasmic side of the membrane.

It is found in the membrane. This is an uncharacterized protein from Xenopus laevis (African clawed frog).